The sequence spans 75 residues: UPF0352 protein YejL (75 aa).

This sequence belongs to the UPF0352 family.

This chain is UPF0352 protein YejL, found in Escherichia coli O139:H28 (strain E24377A / ETEC).